The sequence spans 387 residues: Lipid-A-disaccharide synthase (387 aa).

The protein belongs to the LpxB family.

The catalysed reaction is a lipid X + a UDP-2-N,3-O-bis[(3R)-3-hydroxyacyl]-alpha-D-glucosamine = a lipid A disaccharide + UDP + H(+). It functions in the pathway bacterial outer membrane biogenesis; LPS lipid A biosynthesis. Functionally, condensation of UDP-2,3-diacylglucosamine and 2,3-diacylglucosamine-1-phosphate to form lipid A disaccharide, a precursor of lipid A, a phosphorylated glycolipid that anchors the lipopolysaccharide to the outer membrane of the cell. The protein is Lipid-A-disaccharide synthase of Nitrosococcus oceani (strain ATCC 19707 / BCRC 17464 / JCM 30415 / NCIMB 11848 / C-107).